Here is a 460-residue protein sequence, read N- to C-terminus: MDSIVTTEDTIAAIASAISIGKGGVAIIRVSGKDAINSCKKIVQTKSKYAWESHRVFRGFIQENKQNKFIDEVLILVMKSPNSFTGEDVVELHCHGGIIIVNKVLKILLSSNSRVRIANPGEFSQRAFLNGKIDLTQAESINQLINASNTRSAELAFSGIQGEIKKKIDDIKNDLINQLCEIEARVDFEEDFTDFDYTKYLKNIKKVKEKIELLIENAKRNSYIHNGISIALIGKTNVGKSSLLNLLAKKEKAIVTNIPGTTRDVIEVNLTINDIPMKIIDTAGIRETYEQIESIGIKKSFGKIKESDFIIYIYSLEEGFNEEDKKIIQEIPKEKLITILGNKKDLIDCKNINSNELKNTILMSIKNNDGEKLLIDTIIKKCGLKQVENINIFLNERHQTNLSACLSNLNDTDEIIENKLPFDLLSIELRDGIQNLSKITGQELTEELLDNIFSKFCIGK.

(6S)-5-formyl-5,6,7,8-tetrahydrofolate-binding residues include arginine 29, glutamate 91, and lysine 132. Residues 227–383 (GISIALIGKT…LIDTIIKKCG (157 aa)) enclose the TrmE-type G domain. Asparagine 237 is a K(+) binding site. Residues 237-242 (NVGKSS), 256-262 (TNIPGTT), and 281-284 (DTAG) contribute to the GTP site. Residue serine 241 participates in Mg(2+) binding. Residues threonine 256, isoleucine 258, and threonine 261 each contribute to the K(+) site. Threonine 262 serves as a coordination point for Mg(2+). Lysine 460 provides a ligand contact to (6S)-5-formyl-5,6,7,8-tetrahydrofolate.

It belongs to the TRAFAC class TrmE-Era-EngA-EngB-Septin-like GTPase superfamily. TrmE GTPase family. In terms of assembly, homodimer. Heterotetramer of two MnmE and two MnmG subunits. The cofactor is K(+).

It localises to the cytoplasm. In terms of biological role, exhibits a very high intrinsic GTPase hydrolysis rate. Involved in the addition of a carboxymethylaminomethyl (cmnm) group at the wobble position (U34) of certain tRNAs, forming tRNA-cmnm(5)s(2)U34. This is tRNA modification GTPase MnmE from Prochlorococcus marinus (strain MIT 9301).